A 1003-amino-acid chain; its full sequence is Rho-associated protein kinase 1 (1003 aa).

The disordered stretch occupies residues 1-28 (VAPVVPDLSSDIDTSNFDDLEEDKGEEE). The 58-residue stretch at 1-58 (VAPVVPDLSSDIDTSNFDDLEEDKGEEETFPIPKAFVGNQLPFVGFTYYSNRRYLSSA) folds into the AGC-kinase C-terminal domain. Positions 16 to 28 (NFDDLEEDKGEEE) are enriched in acidic residues. The segment at 17–376 (FDDLEEDKGE…KKLKEEREAR (360 aa)) is interaction with FHOD1. Residues 71–341 (KSLQESLQKT…RLEQEVNEHK (271 aa)) are a coiled coil. The REM-1 domain maps to 128 to 205 (STVSQIEKEK…LEEANDLLRT (78 aa)). Lys296 carries the N6-acetyllysine modification. The SHROOM3 binding stretch occupies residues 356-595 (EAKSVAMCEM…TVSRLEEANS (240 aa)). Residues 598-664 (TKDIEILRRE…LAEIMNRKDF (67 aa)) enclose the RhoBD domain. Residues 647-659 (LKTQAVNKLAEIM) are RHOA binding. The stretch at 660–751 (NRKDFKIDRK…KLLDLSDSTS (92 aa)) forms a coiled coil. 2 positions are modified to phosphoserine: Ser754 and Ser757. An auto-inhibitory region spans residues 764 to 1003 (NLPESRIEGW…VVKNTSGKTR (240 aa)). One can recognise a PH domain in the interval 767 to 966 (ESRIEGWLSV…WVTHLVKKIP (200 aa)). The Phorbol-ester/DAG-type zinc-finger motif lies at 877–930 (GHEFIPTLYHFPANCDACAKPLWHVFKPPPALECRRCHVKCHRDHLDKKEDLIC). Residues 968–1003 (NPPSGFVRASPRTLSTRSTANQSFRKVVKNTSGKTR) form a disordered region. The residue at position 977 (Ser977) is a Phosphoserine. The span at 979–1003 (RTLSTRSTANQSFRKVVKNTSGKTR) shows a compositional bias: polar residues.

The protein belongs to the protein kinase superfamily. AGC Ser/Thr protein kinase family. As to quaternary structure, homodimer. Interacts with RHOA (activated by GTP), RHOB, RHOC, GEM, MYLC2B, RHOE, PPP1R12A, LIMK1, LIMK2, TSG101, CHORDC1, DAPK3, PFN1, PTEN and JIP3. Interacts with ITGB1BP1 (via N-terminus and PTB domain). Interacts with FHOD1 in a Src-dependent manner. Interacts with SHROOM3. Requires Mg(2+) as cofactor. Autophosphorylated on serine and threonine residues. Post-translationally, cleaved by caspase-3 during apoptosis. This leads to constitutive activation of the kinase and membrane blebbing.

It localises to the cytoplasm. Its subcellular location is the cytoskeleton. The protein localises to the microtubule organizing center. It is found in the centrosome. The protein resides in the centriole. It localises to the golgi apparatus membrane. Its subcellular location is the cell projection. The protein localises to the bleb. It is found in the cell membrane. The protein resides in the lamellipodium. It localises to the ruffle. It carries out the reaction L-seryl-[protein] + ATP = O-phospho-L-seryl-[protein] + ADP + H(+). It catalyses the reaction L-threonyl-[protein] + ATP = O-phospho-L-threonyl-[protein] + ADP + H(+). Activated by RHOA binding. Inhibited by Y-27632. In terms of biological role, protein kinase which is a key regulator of actin cytoskeleton and cell polarity. Involved in regulation of smooth muscle contraction, actin cytoskeleton organization, stress fiber and focal adhesion formation, neurite retraction, cell adhesion and motility via phosphorylation of DAPK3, GFAP, LIMK1, LIMK2, MYL9/MLC2, TPPP, PFN1 and PPP1R12A. Phosphorylates FHOD1 and acts synergistically with it to promote SRC-dependent non-apoptotic plasma membrane blebbing. Phosphorylates JIP3 and regulates the recruitment of JNK to JIP3 upon UVB-induced stress. Acts as a suppressor of inflammatory cell migration by regulating PTEN phosphorylation and stability. Acts as a negative regulator of VEGF-induced angiogenic endothelial cell activation. Required for centrosome positioning and centrosome-dependent exit from mitosis. Plays a role in terminal erythroid differentiation. May regulate closure of the eyelids and ventral body wall by inducing the assembly of actomyosin bundles. Promotes keratinocyte terminal differentiation. Involved in osteoblast compaction through the fibronectin fibrillogenesis cell-mediated matrix assembly process, essential for osteoblast mineralization. The chain is Rho-associated protein kinase 1 (ROCK1) from Pan troglodytes (Chimpanzee).